The primary structure comprises 152 residues: Arginine repressor (152 aa).

The protein belongs to the ArgR family.

The protein localises to the cytoplasm. It participates in amino-acid biosynthesis; L-arginine biosynthesis [regulation]. In terms of biological role, regulates arginine biosynthesis genes. In Lactiplantibacillus plantarum (strain ATCC BAA-793 / NCIMB 8826 / WCFS1) (Lactobacillus plantarum), this protein is Arginine repressor.